Reading from the N-terminus, the 224-residue chain is Holliday junction branch migration complex subunit RuvA (224 aa).

The tract at residues 1–64 (MIGKVAGILD…EDLLQLFGFP (64 aa)) is domain I. Positions 65–143 (TMIEKEWHRL…ALMAMGGGTA (79 aa)) are domain II. Residues 141–185 (GTAALAPSEPPEPEPGTSSGSRRKTRAPEPPRPSHTADALSALAN) are disordered. The interval 144 to 170 (ALAPSEPPEPEPGTSSGSRRKTRAPEP) is flexible linker. The interval 171-224 (PRPSHTADALSALANLGYQPTDAAQAVAQAAGESPDADTAALIRAALKLLAPKS) is domain III.

It belongs to the RuvA family. In terms of assembly, homotetramer. Forms an RuvA(8)-RuvB(12)-Holliday junction (HJ) complex. HJ DNA is sandwiched between 2 RuvA tetramers; dsDNA enters through RuvA and exits via RuvB. An RuvB hexamer assembles on each DNA strand where it exits the tetramer. Each RuvB hexamer is contacted by two RuvA subunits (via domain III) on 2 adjacent RuvB subunits; this complex drives branch migration. In the full resolvosome a probable DNA-RuvA(4)-RuvB(12)-RuvC(2) complex forms which resolves the HJ.

The protein localises to the cytoplasm. Its function is as follows. The RuvA-RuvB-RuvC complex processes Holliday junction (HJ) DNA during genetic recombination and DNA repair, while the RuvA-RuvB complex plays an important role in the rescue of blocked DNA replication forks via replication fork reversal (RFR). RuvA specifically binds to HJ cruciform DNA, conferring on it an open structure. The RuvB hexamer acts as an ATP-dependent pump, pulling dsDNA into and through the RuvAB complex. HJ branch migration allows RuvC to scan DNA until it finds its consensus sequence, where it cleaves and resolves the cruciform DNA. This is Holliday junction branch migration complex subunit RuvA from Cereibacter sphaeroides (strain ATCC 17029 / ATH 2.4.9) (Rhodobacter sphaeroides).